A 242-amino-acid polypeptide reads, in one-letter code: Murein peptide amidase A (242 aa).

A Peptidase M14 domain is found at 1-234; the sequence is MTVTRPRAER…FAMANLLRWH (234 aa). Zn(2+) contacts are provided by H49, E52, and H157. Residue E210 is the Proton donor/acceptor of the active site.

This sequence belongs to the peptidase M14 family. As to quaternary structure, homodimer. Requires Zn(2+) as cofactor.

The protein localises to the cytoplasm. It carries out the reaction L-alanyl-gamma-D-glutamyl-meso-2,6-diaminopimelate + H2O = L-alanyl-D-glutamate + meso-2,6-diaminopimelate. It participates in cell wall degradation; peptidoglycan degradation. Functionally, involved in muropeptide degradation. Catalyzes the hydrolysis of the gamma-D-glutamyl-diaminopimelic acid (gamma-D-Glu-Dap) amide bond in the murein tripeptide L-alanyl-gamma-D-glutamyl-meso-diaminopimelic acid, leading to the formation of L-Ala-gamma-D-Glu and Dap. The protein is Murein peptide amidase A of Escherichia coli O157:H7.